The primary structure comprises 299 residues: MCVRVPATSANLGPGFDCLGVALDLANEFEFCEADRFRCVVHSTVSPEDARQVATDERNLAWRAFTHLFEHLGKTPPTVALTVMMHVPLGRGLGSSATAIVGGIAAANRWLGSPLSTPEWLLLASRLEGHPDNVVPAALGGCQLSILGETLLTCALDWHPQIALVLAVPDFALATSKARAALPKTVPHTDAVFNAVHLALLVRALATGDARWLAEALQDRLHQPYRTGLIPGWQDVRAAALEAGAWGVVISGAGPSVLALTHLDCAEAVRQAMASTWPNACLYCPGLDPNGCRVEVEAG.

88 to 98 (PLGRGLGSSAT) serves as a coordination point for ATP.

It belongs to the GHMP kinase family. Homoserine kinase subfamily.

It is found in the cytoplasm. The enzyme catalyses L-homoserine + ATP = O-phospho-L-homoserine + ADP + H(+). Its pathway is amino-acid biosynthesis; L-threonine biosynthesis; L-threonine from L-aspartate: step 4/5. Its function is as follows. Catalyzes the ATP-dependent phosphorylation of L-homoserine to L-homoserine phosphate. This is Homoserine kinase from Gloeobacter violaceus (strain ATCC 29082 / PCC 7421).